The primary structure comprises 343 residues: Protein RecA (343 aa).

Position 65–72 (65–72) interacts with ATP; the sequence is GPESSGKT.

Belongs to the RecA family.

It localises to the cytoplasm. Can catalyze the hydrolysis of ATP in the presence of single-stranded DNA, the ATP-dependent uptake of single-stranded DNA by duplex DNA, and the ATP-dependent hybridization of homologous single-stranded DNAs. It interacts with LexA causing its activation and leading to its autocatalytic cleavage. The chain is Protein RecA from Pseudoalteromonas atlantica (strain T6c / ATCC BAA-1087).